The sequence spans 503 residues: Cytochrome P450 3A7 (503 aa).

Cysteine 442 serves as a coordination point for heme.

The protein belongs to the cytochrome P450 family. Heme is required as a cofactor. Expressed in fetal liver (at protein level).

The protein localises to the endoplasmic reticulum membrane. The protein resides in the microsome membrane. The catalysed reaction is an organic molecule + reduced [NADPH--hemoprotein reductase] + O2 = an alcohol + oxidized [NADPH--hemoprotein reductase] + H2O + H(+). It carries out the reaction 3beta-hydroxyandrost-5-en-17-one + reduced [NADPH--hemoprotein reductase] + O2 = 3beta,16alpha-dihydroxy-androst-5-en-17-one + oxidized [NADPH--hemoprotein reductase] + H2O + H(+). The enzyme catalyses dehydroepiandrosterone 3-sulfate + reduced [NADPH--hemoprotein reductase] + O2 = 16alpha-hydroxydehydroepiandrosterone 3-sulfate + oxidized [NADPH--hemoprotein reductase] + H2O + H(+). It catalyses the reaction testosterone + reduced [NADPH--hemoprotein reductase] + O2 = 6beta,17beta-dihydroxyandrost-4-en-3-one + oxidized [NADPH--hemoprotein reductase] + H2O + H(+). The catalysed reaction is estrone + reduced [NADPH--hemoprotein reductase] + O2 = 2-hydroxyestrone + oxidized [NADPH--hemoprotein reductase] + H2O + H(+). It carries out the reaction estrone + reduced [NADPH--hemoprotein reductase] + O2 = 4-hydroxyestrone + oxidized [NADPH--hemoprotein reductase] + H2O + H(+). The enzyme catalyses estrone + reduced [NADPH--hemoprotein reductase] + O2 = 16alpha-hydroxyestrone + oxidized [NADPH--hemoprotein reductase] + H2O + H(+). It catalyses the reaction 17beta-estradiol + reduced [NADPH--hemoprotein reductase] + O2 = 2-hydroxy-17beta-estradiol + oxidized [NADPH--hemoprotein reductase] + H2O + H(+). The catalysed reaction is 17beta-estradiol + reduced [NADPH--hemoprotein reductase] + O2 = 6beta-hydroxyestradiol-17beta + oxidized [NADPH--hemoprotein reductase] + H2O + H(+). It carries out the reaction all-trans-retinoate + reduced [NADPH--hemoprotein reductase] + O2 = all-trans-4-hydroxyretinoate + oxidized [NADPH--hemoprotein reductase] + H2O + H(+). The enzyme catalyses all-trans-retinoate + reduced [NADPH--hemoprotein reductase] + O2 = all-trans-18-hydroxyretinoate + oxidized [NADPH--hemoprotein reductase] + H2O + H(+). It participates in steroid hormone biosynthesis. The protein operates within cofactor metabolism; retinol metabolism. Functionally, a cytochrome P450 monooxygenase involved in the metabolism of steroid hormones and vitamins during embryogenesis. Mechanistically, uses molecular oxygen inserting one oxygen atom into a substrate, and reducing the second into a water molecule, with two electrons provided by NADPH via cytochrome P450 reductase (NADPH--hemoprotein reductase). Catalyzes the hydroxylation of carbon-hydrogen bonds. Metabolizes 3beta-hydroxyandrost-5-en-17-one (dehydroepiandrosterone, DHEA), a precursor in the biosynthesis of androgen and estrogen steroid hormones. Exhibits high catalytic activity for the formation of hydroxyestrogens from estrone (E1), particularly D-ring hydroxylated estrone at the C16-alpha position. Mainly hydroxylates all trans-retinoic acid (atRA) to 4-hydroxyretinoate and may play a role in atRA clearance during fetal development. Also involved in the oxidative metabolism of xenobiotics including anticonvulsants. The sequence is that of Cytochrome P450 3A7 from Homo sapiens (Human).